Reading from the N-terminus, the 248-residue chain is Probable pyridoxal 5'-phosphate synthase subunit pdx2 (248 aa).

70–72 is a binding site for L-glutamine; that stretch reads GES. The active-site Nucleophile is the Cys-106. L-glutamine contacts are provided by residues Arg-136 and 174 to 175; that span reads IR. Active-site charge relay system residues include His-221 and Glu-223.

Belongs to the glutaminase PdxT/SNO family.

The enzyme catalyses aldehydo-D-ribose 5-phosphate + D-glyceraldehyde 3-phosphate + L-glutamine = pyridoxal 5'-phosphate + L-glutamate + phosphate + 3 H2O + H(+). The catalysed reaction is L-glutamine + H2O = L-glutamate + NH4(+). The protein operates within cofactor biosynthesis; pyridoxal 5'-phosphate biosynthesis. Functionally, catalyzes the hydrolysis of glutamine to glutamate and ammonia as part of the biosynthesis of pyridoxal 5'-phosphate. The resulting ammonia molecule is channeled to the active site of pdx1. The polypeptide is Probable pyridoxal 5'-phosphate synthase subunit pdx2 (Dictyostelium discoideum (Social amoeba)).